Reading from the N-terminus, the 475-residue chain is Probable dolichyl pyrophosphate Man9GlcNAc2 alpha-1,3-glucosyltransferase (475 aa).

8 helical membrane-spanning segments follow: residues 114 to 133 (VVSA…AYSL), 161 to 181 (GHFQ…AAIL), 235 to 255 (AVVL…LQAV), 296 to 316 (MALV…VLLF), 322 to 342 (VGFL…SFQV), 385 to 405 (LLVP…CFDS), 418 to 438 (IANI…TVPA), and 441 to 461 (KYPD…FFLF).

It belongs to the ALG6/ALG8 glucosyltransferase family.

It is found in the endoplasmic reticulum membrane. The enzyme catalyses an alpha-D-Man-(1-&gt;2)-alpha-D-Man-(1-&gt;2)-alpha-D-Man-(1-&gt;3)-[alpha-D-Man-(1-&gt;2)-alpha-D-Man-(1-&gt;3)-[alpha-D-Man-(1-&gt;2)-alpha-D-Man-(1-&gt;6)]-alpha-D-Man-(1-&gt;6)]-beta-D-Man-(1-&gt;4)-beta-D-GlcNAc-(1-&gt;4)-alpha-D-GlcNAc-diphospho-di-trans,poly-cis-dolichol + a di-trans,poly-cis-dolichyl beta-D-glucosyl phosphate = an alpha-D-Glc-(1-&gt;3)-alpha-D-Man-(1-&gt;2)-alpha-D-Man-(1-&gt;2)-alpha-D-Man-(1-&gt;3)-[alpha-D-Man-(1-&gt;2)-alpha-D-Man-(1-&gt;3)-[alpha-D-Man-(1-&gt;2)-alpha-D-Man-(1-&gt;6)]-alpha-D-Man-(1-&gt;6)]-beta-D-Man-(1-&gt;4)-beta-D-GlcNAc-(1-&gt;4)-alpha-D-GlcNAc-diphospho-di-trans,poly-cis-dolichol + a di-trans,poly-cis-dolichyl phosphate + H(+). Its pathway is protein modification; protein glycosylation. In terms of biological role, adds the first glucose residue to the lipid-linked oligosaccharide precursor for N-linked glycosylation. Transfers glucose from dolichyl phosphate glucose (Dol-P-Glc) onto the lipid-linked oligosaccharide Man(9)GlcNAc(2)-PP-Dol. Involved in cuticle differentiation. This is Probable dolichyl pyrophosphate Man9GlcNAc2 alpha-1,3-glucosyltransferase (gny) from Drosophila melanogaster (Fruit fly).